The primary structure comprises 332 residues: L-lactate dehydrogenase A chain (332 aa).

Residue Ala-2 is modified to N-acetylalanine. At Lys-5 the chain carries N6-acetyllysine; alternate. Lys-5 bears the N6-succinyllysine; alternate mark. Position 14 is an N6-acetyllysine (Lys-14). 29–57 (GAVGMACAISILMKDLADEVALVDVMEDK) is a binding site for NAD(+). An N6-acetyllysine; alternate modification is found at Lys-57. Lys-57 participates in a covalent cross-link: Glycyl lysine isopeptide (Lys-Gly) (interchain with G-Cter in SUMO2); alternate. Lys-81 bears the N6-acetyllysine mark. Residue Arg-106 participates in substrate binding. Lys-118 carries the N6-acetyllysine; alternate modification. N6-succinyllysine; alternate is present on Lys-118. Lys-126 bears the N6-acetyllysine mark. Asn-138 lines the NAD(+) pocket. Substrate is bound by residues Asn-138 and Arg-169. His-193 (proton acceptor) is an active-site residue. N6-acetyllysine is present on residues Lys-224 and Lys-232. Tyr-239 is modified (phosphotyrosine). Lys-243 is subject to N6-acetyllysine. Thr-248 provides a ligand contact to substrate. At Thr-309 the chain carries Phosphothreonine. Lys-318 bears the N6-acetyllysine; alternate mark. Lys-318 carries the post-translational modification N6-succinyllysine; alternate. Residue Thr-322 is modified to Phosphothreonine.

It belongs to the LDH/MDH superfamily. LDH family. As to quaternary structure, homotetramer. Interacts with PTEN upstream reading frame protein MP31. ISGylated.

Its subcellular location is the cytoplasm. It carries out the reaction (S)-lactate + NAD(+) = pyruvate + NADH + H(+). Its pathway is fermentation; pyruvate fermentation to lactate; (S)-lactate from pyruvate: step 1/1. Interconverts simultaneously and stereospecifically pyruvate and lactate with concomitant interconversion of NADH and NAD(+). The polypeptide is L-lactate dehydrogenase A chain (LDHA) (Bos mutus grunniens (Wild yak)).